An 860-amino-acid chain; its full sequence is Rod cGMP-specific 3',5'-cyclic phosphodiesterase subunit alpha (860 aa).

Gly-2 carries the post-translational modification N-acetylglycine. GAF domains follow at residues 73-222 (QTEK…NLIM) and 254-431 (DIER…GWSV). The PDEase domain occupies 483-816 (EEEELAEILQ…KEWKALADEY (334 aa)). Residue His-559 is the Proton donor of the active site. Residues His-563, His-599, Asp-600, and Asp-720 each contribute to the a divalent metal cation site. The tract at residues 821–860 (KVQEEKKQKQQSAKSAAAGNQPGGNPSPGGATTSKSCCIQ) is disordered. The segment covering 830 to 851 (QQSAKSAAAGNQPGGNPSPGGA) has biased composition (low complexity). Residue Cys-857 is modified to Cysteine methyl ester. Residue Cys-857 is the site of S-farnesyl cysteine attachment. A propeptide spans 858-860 (CIQ) (removed in mature form).

The protein belongs to the cyclic nucleotide phosphodiesterase family. Oligomer composed of two catalytic chains (alpha and beta), an inhibitory chain (gamma) and the delta chain. It depends on a divalent metal cation as a cofactor.

It localises to the cell membrane. The protein resides in the cell projection. Its subcellular location is the cilium. It is found in the photoreceptor outer segment. The enzyme catalyses 3',5'-cyclic GMP + H2O = GMP + H(+). Rod-specific cGMP phosphodiesterase that catalyzes the hydrolysis of 3',5'-cyclic GMP. This protein participates in processes of transmission and amplification of the visual signal. This chain is Rod cGMP-specific 3',5'-cyclic phosphodiesterase subunit alpha, found in Homo sapiens (Human).